The following is a 199-amino-acid chain: N-(5'-phosphoribosyl)anthranilate isomerase (199 aa).

This sequence belongs to the TrpF family.

The enzyme catalyses N-(5-phospho-beta-D-ribosyl)anthranilate = 1-(2-carboxyphenylamino)-1-deoxy-D-ribulose 5-phosphate. It functions in the pathway amino-acid biosynthesis; L-tryptophan biosynthesis; L-tryptophan from chorismate: step 3/5. This Streptococcus pneumoniae serotype 19F (strain G54) protein is N-(5'-phosphoribosyl)anthranilate isomerase.